The sequence spans 211 residues: tRNA (guanine-N(7)-)-methyltransferase (211 aa).

S-adenosyl-L-methionine contacts are provided by Glu44, Asp69, Asp96, and Asp118. The active site involves Asp118. A substrate-binding site is contributed by Lys122. The segment at Lys124–Arg129 is interaction with RNA. Substrate contacts are provided by residues Asp154 and Thr191 to Glu194.

Belongs to the class I-like SAM-binding methyltransferase superfamily. TrmB family.

The catalysed reaction is guanosine(46) in tRNA + S-adenosyl-L-methionine = N(7)-methylguanosine(46) in tRNA + S-adenosyl-L-homocysteine. Its pathway is tRNA modification; N(7)-methylguanine-tRNA biosynthesis. Catalyzes the formation of N(7)-methylguanine at position 46 (m7G46) in tRNA. The chain is tRNA (guanine-N(7)-)-methyltransferase from Streptococcus agalactiae serotype Ia (strain ATCC 27591 / A909 / CDC SS700).